We begin with the raw amino-acid sequence, 532 residues long: Probable cytochrome c oxidase subunit 1 (532 aa).

Transmembrane regions (helical) follow at residues 33–53 (IMYI…SLLF), 74–94 (VLIT…ALFG), 95–115 (GFGN…FPRL), 118–138 (ISFW…FVDG), 163–183 (MAIF…INLI), 200–220 (PLFV…MPVL), 252–272 (LFWF…FGIV), and 284–304 (IFGY…GFIV). Position 79 (histidine 79) interacts with Fe(II)-heme a. Positions 258 and 262 each coordinate Cu cation. Residues histidine 307 and histidine 308 each coordinate Cu cation. 2 helical membrane passes run 318 to 338 (ALIY…IKIF) and 355 to 375 (MLFS…GIIL). Histidine 393 provides a ligand contact to heme a3. The next 3 helical transmembrane spans lie at 394 to 414 (FHYT…YYWF), 431 to 451 (FWIT…LGLA), and 473 to 493 (IGAG…FYTL). Histidine 395 contributes to the Fe(II)-heme a binding site.

It belongs to the heme-copper respiratory oxidase family.

The protein resides in the cell membrane. It carries out the reaction 4 Fe(II)-[cytochrome c] + O2 + 8 H(+)(in) = 4 Fe(III)-[cytochrome c] + 2 H2O + 4 H(+)(out). It participates in energy metabolism; oxidative phosphorylation. Cytochrome c oxidase is the component of the respiratory chain that catalyzes the reduction of oxygen to water. Subunits 1-3 form the functional core of the enzyme complex. CO I is the catalytic subunit of the enzyme. Electrons originating in cytochrome c are transferred via the copper A center of subunit 2 and heme A of subunit 1 to the bimetallic center formed by heme A3 and copper B. The chain is Probable cytochrome c oxidase subunit 1 (ctaD) from Rickettsia conorii (strain ATCC VR-613 / Malish 7).